The following is a 379-amino-acid chain: ATPase ASNA1 homolog (379 aa).

The interval 1–20 (MSEDESNSVSCSLSLESDGY) is disordered. Over residues 7–18 (NSVSCSLSLESD) the composition is skewed to low complexity. Residue 46–53 (KGGVGKTT) coordinates ATP. The active site involves Asp75. ATP-binding residues include Glu246 and Asn273.

It belongs to the arsA ATPase family. Homodimer.

Its subcellular location is the cytoplasm. It is found in the endoplasmic reticulum. In terms of biological role, ATPase required for the post-translational delivery of tail-anchored (TA) proteins to the endoplasmic reticulum. Recognizes and selectively binds the transmembrane domain of TA proteins in the cytosol. This complex then targets to the endoplasmic reticulum by membrane-bound receptors, where the tail-anchored protein is released for insertion. This process is regulated by ATP binding and hydrolysis. ATP binding drives the homodimer towards the closed dimer state, facilitating recognition of newly synthesized TA membrane proteins. ATP hydrolysis is required for insertion. Subsequently, the homodimer reverts towards the open dimer state, lowering its affinity for the membrane-bound receptor, and returning it to the cytosol to initiate a new round of targeting. The polypeptide is ATPase ASNA1 homolog (Plasmodium falciparum (isolate 3D7)).